A 344-amino-acid chain; its full sequence is Ferrochelatase (344 aa).

Fe cation contacts are provided by His214 and Glu295.

This sequence belongs to the ferrochelatase family.

The protein localises to the cytoplasm. The catalysed reaction is heme b + 2 H(+) = protoporphyrin IX + Fe(2+). It functions in the pathway porphyrin-containing compound metabolism; protoheme biosynthesis; protoheme from protoporphyrin-IX: step 1/1. Functionally, catalyzes the ferrous insertion into protoporphyrin IX. The sequence is that of Ferrochelatase from Agrobacterium fabrum (strain C58 / ATCC 33970) (Agrobacterium tumefaciens (strain C58)).